A 200-amino-acid chain; its full sequence is Ras-related protein RABF2a (200 aa).

17 to 25 (GDVGAGKSS) contacts GTP. The short motif at 39 to 47 (QESTIGAAF) is the Effector region element. GTP-binding positions include 65 to 69 (DTAGQ), 123 to 126 (NKAD), and 153 to 154 (SA). 2 S-geranylgeranyl cysteine lipidation sites follow: Cys198 and Cys199.

It belongs to the small GTPase superfamily. Rab family. Interacts with VPS9A. Interacts with EREX (via PX domain). Binds to VPS3. As to expression, high in stem, root, and inflorescence.

It is found in the endosome membrane. The protein resides in the prevacuolar compartment membrane. Involved in the trafficking of soluble cargo proteins from the prevacuolar compartment to the central vacuole. Involved in vacuolar transport of storage proteins with EREX as effector. Regulates membrane trafficking to protein storage vacuoles (PSVs). This chain is Ras-related protein RABF2a (RABF2A), found in Arabidopsis thaliana (Mouse-ear cress).